The following is an 875-amino-acid chain: Alanine--tRNA ligase (875 aa).

Residues His-596, His-600, Cys-700, and His-704 each coordinate Zn(2+).

It belongs to the class-II aminoacyl-tRNA synthetase family. It depends on Zn(2+) as a cofactor.

It localises to the cytoplasm. The enzyme catalyses tRNA(Ala) + L-alanine + ATP = L-alanyl-tRNA(Ala) + AMP + diphosphate. Catalyzes the attachment of alanine to tRNA(Ala) in a two-step reaction: alanine is first activated by ATP to form Ala-AMP and then transferred to the acceptor end of tRNA(Ala). Also edits incorrectly charged Ser-tRNA(Ala) and Gly-tRNA(Ala) via its editing domain. This Methanocella arvoryzae (strain DSM 22066 / NBRC 105507 / MRE50) protein is Alanine--tRNA ligase.